We begin with the raw amino-acid sequence, 209 residues long: tRNA (guanine-N(7)-)-methyltransferase (209 aa).

The S-adenosyl-L-methionine site is built by Glu40, Glu65, and Asp114. Residue Asp114 is part of the active site. Residues Asp150 and 188 to 191 contribute to the substrate site; that span reads TAFE.

This sequence belongs to the class I-like SAM-binding methyltransferase superfamily. TrmB family.

The enzyme catalyses guanosine(46) in tRNA + S-adenosyl-L-methionine = N(7)-methylguanosine(46) in tRNA + S-adenosyl-L-homocysteine. It functions in the pathway tRNA modification; N(7)-methylguanine-tRNA biosynthesis. Functionally, catalyzes the formation of N(7)-methylguanine at position 46 (m7G46) in tRNA. The protein is tRNA (guanine-N(7)-)-methyltransferase of Bdellovibrio bacteriovorus (strain ATCC 15356 / DSM 50701 / NCIMB 9529 / HD100).